The following is a 235-amino-acid chain: Small ribosomal subunit protein uS3 (235 aa).

In terms of domain architecture, KH type-2 spans 39 to 107; that stretch reads IREFIKEECK…ELHLNIVEVR (69 aa). The interval 213–235 is disordered; it reads QARDRKAQELQDGPAPRGAGGRR.

This sequence belongs to the universal ribosomal protein uS3 family. As to quaternary structure, part of the 30S ribosomal subunit. Forms a tight complex with proteins S10 and S14.

In terms of biological role, binds the lower part of the 30S subunit head. Binds mRNA in the 70S ribosome, positioning it for translation. This is Small ribosomal subunit protein uS3 from Ruegeria pomeroyi (strain ATCC 700808 / DSM 15171 / DSS-3) (Silicibacter pomeroyi).